The sequence spans 236 residues: Leucyl/phenylalanyl-tRNA--protein transferase (236 aa).

This sequence belongs to the L/F-transferase family.

It is found in the cytoplasm. The enzyme catalyses N-terminal L-lysyl-[protein] + L-leucyl-tRNA(Leu) = N-terminal L-leucyl-L-lysyl-[protein] + tRNA(Leu) + H(+). It catalyses the reaction N-terminal L-arginyl-[protein] + L-leucyl-tRNA(Leu) = N-terminal L-leucyl-L-arginyl-[protein] + tRNA(Leu) + H(+). The catalysed reaction is L-phenylalanyl-tRNA(Phe) + an N-terminal L-alpha-aminoacyl-[protein] = an N-terminal L-phenylalanyl-L-alpha-aminoacyl-[protein] + tRNA(Phe). Functionally, functions in the N-end rule pathway of protein degradation where it conjugates Leu, Phe and, less efficiently, Met from aminoacyl-tRNAs to the N-termini of proteins containing an N-terminal arginine or lysine. The protein is Leucyl/phenylalanyl-tRNA--protein transferase of Shewanella sp. (strain ANA-3).